Reading from the N-terminus, the 614-residue chain is UvrABC system protein C (614 aa).

Residues 14–91 form the GIY-YIG domain; that stretch reads TSPGCYIHKD…IKENKPKYNI (78 aa). Residues 196-231 enclose the UVR domain; it reads NKIIDELKGKMAAAAQTMEFERAAEYRDLIQAIGTL. The tract at residues 595 to 614 is disordered; it reads LPQVAEERVDYQTEGNHNKP.

The protein belongs to the UvrC family. In terms of assembly, interacts with UvrB in an incision complex.

The protein resides in the cytoplasm. Functionally, the UvrABC repair system catalyzes the recognition and processing of DNA lesions. UvrC both incises the 5' and 3' sides of the lesion. The N-terminal half is responsible for the 3' incision and the C-terminal half is responsible for the 5' incision. This chain is UvrABC system protein C, found in Streptococcus pneumoniae (strain Taiwan19F-14).